We begin with the raw amino-acid sequence, 282 residues long: MLRGSTSVCRSLELVTQAARYASAATAAAPTGKRIKTFEIYRFNPEEPGAKPKLQKFDVDLDKCGTMVLDALIKIKNEVDPTLTFRRSCREGICGSCAMNIAGENTLACICNIDQNTSKTTKIYPLPHMFVIKDLVPDMNLFYAQYASIQPWLQKKTKINLGEKQQYQSIKEQEKLDGLYECILCACCSASCPSYWWNADKYLGPAVLMQAYRWIIDSRDDSAAERLARMQDGFSAFKCHTIMNCTKTCPKHLNPARAIGEIKMLLTKMKTKPAPLPTPANF.

Residues 1–21 constitute a mitochondrion transit peptide; the sequence is MLRGSTSVCRSLELVTQAARY. Positions 39–129 constitute a 2Fe-2S ferredoxin-type domain; it reads EIYRFNPEEP…TTKIYPLPHM (91 aa). Residues Cys89, Cys94, Cys97, and Cys109 each coordinate [2Fe-2S] cluster. Residues 172-202 form the 4Fe-4S ferredoxin-type domain; sequence EQEKLDGLYECILCACCSASCPSYWWNADKY. 3 residues coordinate [4Fe-4S] cluster: Cys182, Cys185, and Cys188. Cys192 is a binding site for [3Fe-4S] cluster. Trp197 is a binding site for a rhodoquinol. Residue Trp197 coordinates a ubiquinone. Cys239 and Cys245 together coordinate [3Fe-4S] cluster. A [4Fe-4S] cluster-binding site is contributed by Cys249.

This sequence belongs to the succinate dehydrogenase/fumarate reductase iron-sulfur protein family. Component of the mitochondrial electron transport chain complex II composed of four subunits: a flavoprotein (Fp), an iron-sulfur protein (Ip), and a large cytochrome b (CybL) subunit and a small cytochrome b (CybS) subunit. There are 2 developmental stage-specific forms of complex II which have the Ip and CybL subunits in common. Complex II from the free-living larvae (aerobic environment) acts as a succinate dehydrogenase and is composed of the common subunit Ip and CybL and the stage specific subunits FpL and CybSL. Complex II from parasitic larvae and adults (anaerobic environment) acts as a fumarate reductase and is composed of the common subunit Ip and CybL and the stage specific subunits FpA and CybSA. The cofactor is [2Fe-2S] cluster. [3Fe-4S] cluster serves as cofactor. Requires [4Fe-4S] cluster as cofactor. Expressed in adult muscles (at protein level).

Its subcellular location is the mitochondrion inner membrane. The enzyme catalyses a ubiquinone + succinate = a ubiquinol + fumarate. It catalyses the reaction a rhodoquinone + succinate = a rhodoquinol + fumarate. It functions in the pathway carbohydrate metabolism; tricarboxylic acid cycle; fumarate from succinate (eukaryal route): step 1/1. Inhibited by the fungicide flutolanil. Its function is as follows. Iron-sulfur protein (Ip) subunit of the mitochondrial electron transport chain complex II which, together with the flavoprotein (Fp) subunit forms the catalytic core of the complex. During the free-living egg-larvae stages, which occur in an aerobic environment, complex II acts as a succinate dehydrogenase by transferring electrons from succinate to ubiquinone. During the parasitic larvae and adult stages, which occur in an anaerobic environment, complex II acts as a fumarate reductase by transferring electrons from rhodoquinol to fumarate. In Ascaris suum (Pig roundworm), this protein is Succinate dehydrogenase [ubiquinone] iron-sulfur subunit, mitochondrial.